Consider the following 165-residue polypeptide: 3-isopropylmalate dehydratase small subunit (165 aa).

The protein belongs to the LeuD family. LeuD type 2 subfamily. In terms of assembly, heterodimer of LeuC and LeuD.

The enzyme catalyses (2R,3S)-3-isopropylmalate = (2S)-2-isopropylmalate. The protein operates within amino-acid biosynthesis; L-leucine biosynthesis; L-leucine from 3-methyl-2-oxobutanoate: step 2/4. Functionally, catalyzes the isomerization between 2-isopropylmalate and 3-isopropylmalate, via the formation of 2-isopropylmaleate. This Saccharolobus islandicus (strain M.14.25 / Kamchatka #1) (Sulfolobus islandicus) protein is 3-isopropylmalate dehydratase small subunit.